Here is a 72-residue protein sequence, read N- to C-terminus: MNYLVMISFALLLVIGVESVRDGYFVEPDNCVVHCMPSSEMCDRGCKHNGATSGSCKAFSKGGNACWCKGLR.

Positions 1–19 (MNYLVMISFALLLVIGVES) are cleaved as a signal peptide. The LCN-type CS-alpha/beta domain occupies 21-72 (RDGYFVEPDNCVVHCMPSSEMCDRGCKHNGATSGSCKAFSKGGNACWCKGLR). Disulfide bonds link Cys-35–Cys-56, Cys-42–Cys-66, and Cys-46–Cys-68. A propeptide (removed by a carboxypeptidase) is located at residue Arg-72.

It belongs to the long (3 C-C) scorpion toxin superfamily. Expressed by the venom gland.

It is found in the secreted. The sequence is that of Probable neurotoxin pcD-993 from Androctonus australis (Sahara scorpion).